We begin with the raw amino-acid sequence, 132 residues long: MKQLIRRLSRVADSAQYSLLRSDSQRPSRRSESFLRSSVTRRSKKQTSSVPEGHVPVYVGDEMERFVVSAELLNHPVFIGLLNRSAQEYGYEQKGVLQIPCHVLVFERIMESLRLGLPVPIDVQDLIGDGTI.

Residues Ser-22–His-54 form a disordered region. A compositionally biased stretch (basic and acidic residues) spans Asp-23–Ser-33.

It belongs to the ARG7 family. In terms of assembly, interacts with and inhibits PP2C-D subfamily of type 2C phosphatases such as PP2C67/PP2C-D1. In terms of tissue distribution, highly expressed in the steles of roots and hypocotyls.

The protein resides in the cytoplasm. Its function is as follows. Provide a mechanistic link between auxin and plasma membrane H(+)-ATPases (PM H(+)-ATPases, e.g. AHA1 and AHA2), and triggers PM H(+)-ATPases activity by promoting phosphorylation of their C-terminal autoinhibitory domain as a result of PP2C-D subfamily of type 2C phosphatases inhibition, thus leading to the acidification of the apoplast and the facilitation of solutes and water uptake to drive cell expansion. Plays a role in the regulation of cell expansion, root meristem patterning and auxin transport. In Arabidopsis thaliana (Mouse-ear cress), this protein is Auxin-responsive protein SAUR72.